The sequence spans 212 residues: Pyridoxine/pyridoxamine 5'-phosphate oxidase (212 aa).

Substrate contacts are provided by residues 7-10 and Lys65; that span reads RRQY. Residues 60–65, 75–76, Arg81, Lys82, and Gln104 each bind FMN; these read RIVLLK and FT. Substrate contacts are provided by Tyr122, Arg126, and Ser130. Residues 139–140 and Trp184 each bind FMN; that span reads QS. Residue 190-192 coordinates substrate; the sequence is RLH. Residue Arg194 coordinates FMN.

The protein belongs to the pyridoxamine 5'-phosphate oxidase family. Homodimer. Requires FMN as cofactor.

The enzyme catalyses pyridoxamine 5'-phosphate + O2 + H2O = pyridoxal 5'-phosphate + H2O2 + NH4(+). The catalysed reaction is pyridoxine 5'-phosphate + O2 = pyridoxal 5'-phosphate + H2O2. Its pathway is cofactor metabolism; pyridoxal 5'-phosphate salvage; pyridoxal 5'-phosphate from pyridoxamine 5'-phosphate: step 1/1. It participates in cofactor metabolism; pyridoxal 5'-phosphate salvage; pyridoxal 5'-phosphate from pyridoxine 5'-phosphate: step 1/1. Functionally, catalyzes the oxidation of either pyridoxine 5'-phosphate (PNP) or pyridoxamine 5'-phosphate (PMP) into pyridoxal 5'-phosphate (PLP). The protein is Pyridoxine/pyridoxamine 5'-phosphate oxidase of Alteromonas mediterranea (strain DSM 17117 / CIP 110805 / LMG 28347 / Deep ecotype).